The following is a 404-amino-acid chain: Latent membrane protein 1 (404 aa).

At 1–23 (MERDLESAPPSAPRPPLGPPLSS) the chain is on the cytoplasmic side. Residues 24–44 (SIGLALLLLLLALLFWLYIVM) traverse the membrane as a helical segment. The Extracellular segment spans residues 45 to 51 (SDWTGGA). A helical membrane pass occupies residues 52-72 (LLVLYSFALMLIIIILIIFIF). Residues 73–75 (RRD) lie on the Cytoplasmic side of the membrane. Residues 76 to 96 (LLCPLGGLGLLLLMITLLLIA) traverse the membrane as a helical segment. The Extracellular segment spans residues 97–106 (LWNLHGQALY). A helical transmembrane segment spans residues 107–127 (LGIVLFIFGCLLVFGIWIYFL). Residues 128 to 139 (EILWRLGATLWQ) lie on the Cytoplasmic side of the membrane. A helical transmembrane segment spans residues 140–160 (LLAFILAFFLAIILLIIALYL). Residues 161-163 (QQN) lie on the Extracellular side of the membrane. The chain crosses the membrane as a helical span at residues 164 to 184 (WWTLLVDLLWLLLFMAILIWM). Topologically, residues 185-404 (YYHGPRHTDE…HGPVQLSYYD (220 aa)) are cytoplasmic. Residues 194-232 (EHHHDDSLPHPQQATDDSSHESDSNSNEGRHHLLVSGAG) form a CTAR1 region. Residues 194-404 (EHHHDDSLPH…HGPVQLSYYD (211 aa)) are disordered. Positions 204–208 (PQQAT) match the Interaction with host TRAF proteins motif. The span at 210–224 (DSSHESDSNSNEGRH) shows a compositional bias: basic and acidic residues. 2 stretches are compositionally biased toward low complexity: residues 251–322 (NGPQ…PQDP) and 375–384 (PHLPTLLLGT). The interval 370–404 (GGGGDPHLPTLLLGTSGSGGDDDDPHGPVQLSYYD) is CTAR2.

It belongs to the herpesviridae LMP-1 family. In terms of assembly, interacts (via PXQXT motif) with host tumor necrosis factor receptor-associated factor (TRAF) proteins TRAF1, TRAF2, TRAF3 and TRAF5. Interacts with human protein ZMYND11; leading to negatively regulate NF-kappa-B activation. Interacts with host UBE2I; this interaction induces the sumoylation of various cellular proteins. Interacts with host IRF7. Interacts with host TYK2. Ubiquitinated on the N-terminus.

The protein localises to the host cell membrane. Functionally, acts as a CD40 functional homolog to prevent apoptosis of infected B-lymphocytes and drive their proliferation. Functions as a constitutively active tumor necrosis factor receptor that induces the activation of several signaling pathways, including those of the NF-kappa-B family. LMP1 signaling leads to up-regulation of antiapoptotic proteins and provide growth signals in latently infected cells. Interacts with host UBE2I and subsequently affects the sumoylation state of several cellular proteins. For example, induces the sumoylation of host IRF7 thereby limiting its transcriptional activity and modulating the activation of innate immune responses. Also inhibits host IFN-alpha-stimulated STAT2 nuclear translocation and interferon-stimulated response element transcriptional activity by interacting with and inhibiting host TYK2. Induces SUMO expression during viral latency thereby dysregulating the host sumoylation processes. The chain is Latent membrane protein 1 (LMP1) from Homo sapiens (Human).